The sequence spans 341 residues: Heat-inducible transcription repressor HrcA (341 aa).

The protein belongs to the HrcA family.

In terms of biological role, negative regulator of class I heat shock genes (grpE-dnaK-dnaJ and groELS operons). Prevents heat-shock induction of these operons. In Leptothrix cholodnii (strain ATCC 51168 / LMG 8142 / SP-6) (Leptothrix discophora (strain SP-6)), this protein is Heat-inducible transcription repressor HrcA.